The chain runs to 207 residues: Ribosomal RNA large subunit methyltransferase E (207 aa).

Gly-60, Trp-62, Asp-80, Asp-96, and Asp-121 together coordinate S-adenosyl-L-methionine. Lys-161 functions as the Proton acceptor in the catalytic mechanism.

The protein belongs to the class I-like SAM-binding methyltransferase superfamily. RNA methyltransferase RlmE family.

It is found in the cytoplasm. It catalyses the reaction uridine(2552) in 23S rRNA + S-adenosyl-L-methionine = 2'-O-methyluridine(2552) in 23S rRNA + S-adenosyl-L-homocysteine + H(+). Specifically methylates the uridine in position 2552 of 23S rRNA at the 2'-O position of the ribose in the fully assembled 50S ribosomal subunit. This is Ribosomal RNA large subunit methyltransferase E from Thioalkalivibrio sulfidiphilus (strain HL-EbGR7).